Reading from the N-terminus, the 207-residue chain is NADH-quinone oxidoreductase subunit C (207 aa).

It belongs to the complex I 30 kDa subunit family. NDH-1 is composed of 14 different subunits. Subunits NuoB, C, D, E, F, and G constitute the peripheral sector of the complex.

The protein localises to the cell inner membrane. The enzyme catalyses a quinone + NADH + 5 H(+)(in) = a quinol + NAD(+) + 4 H(+)(out). Its function is as follows. NDH-1 shuttles electrons from NADH, via FMN and iron-sulfur (Fe-S) centers, to quinones in the respiratory chain. The immediate electron acceptor for the enzyme in this species is believed to be ubiquinone. Couples the redox reaction to proton translocation (for every two electrons transferred, four hydrogen ions are translocated across the cytoplasmic membrane), and thus conserves the redox energy in a proton gradient. The sequence is that of NADH-quinone oxidoreductase subunit C from Rickettsia felis (strain ATCC VR-1525 / URRWXCal2) (Rickettsia azadi).